A 321-amino-acid chain; its full sequence is Putative ankyrin repeat domain-containing protein 26-like protein (321 aa).

ANK repeat units follow at residues 48-78 (KHLG…DLDE), 82-111 (KKRT…QLDV), 115-144 (KNRT…DPDL), 148-177 (YGNT…NIES), and 181-210 (DELT…NLTA). Disordered regions lie at residues 222–242 (EYKE…GTSN) and 268–321 (FNKP…NENI). The span at 229-242 (PRNPQNSNPEGTSN) shows a compositional bias: polar residues.

This chain is Putative ankyrin repeat domain-containing protein 26-like protein (ANKRD26P1), found in Homo sapiens (Human).